The following is a 385-amino-acid chain: Succinate--CoA ligase [ADP-forming] subunit beta (385 aa).

The ATP-grasp domain maps to 9–240 (KEIFAKYGIP…ETQLPQLEVE (232 aa)). ATP is bound by residues Lys-46, 53 to 55 (GRG), Glu-98, Thr-101, and Glu-106. Mg(2+)-binding residues include Asn-195 and Asp-209. Substrate-binding positions include Asn-260 and 317–319 (GIL).

The protein belongs to the succinate/malate CoA ligase beta subunit family. Heterotetramer of two alpha and two beta subunits. Mg(2+) is required as a cofactor.

It carries out the reaction succinate + ATP + CoA = succinyl-CoA + ADP + phosphate. The catalysed reaction is GTP + succinate + CoA = succinyl-CoA + GDP + phosphate. It participates in carbohydrate metabolism; tricarboxylic acid cycle; succinate from succinyl-CoA (ligase route): step 1/1. Succinyl-CoA synthetase functions in the citric acid cycle (TCA), coupling the hydrolysis of succinyl-CoA to the synthesis of either ATP or GTP and thus represents the only step of substrate-level phosphorylation in the TCA. The beta subunit provides nucleotide specificity of the enzyme and binds the substrate succinate, while the binding sites for coenzyme A and phosphate are found in the alpha subunit. In Aquifex aeolicus (strain VF5), this protein is Succinate--CoA ligase [ADP-forming] subunit beta.